The chain runs to 465 residues: MSQGKIVQIIGAVVDVEFPRDMIPRVYDALKLDENGLTLEVQQLLGDGVVRTIAMGSSDGLKRGMTVSNTGAPITVPVGKGTLGRIVDVLGTPVDEAGPIDTDKSRAIHQAAPKFDELSSTTELLETGIKVIDLLCPFAKGGKVGLFGGAGVGKTVNMMELINNIAKAHSGLSVFAGVGERTREGNDFYHEMKDSNVLDKVAMVYGQMNEPPGNRLRVALTGLTMAEYFRDEKDENGKGRDVLFFVDNIYRYTLAGTEVSALLGRMPSAVGYQPTLAEEMGRLQERITSTQTGSITSIQAVYVPADDLTDPSPATTFAHLDATVVLSRDIASLGIYPAVDPLDSTSRQLDPMVLGQEHYDVARGVQSTLQKYKELRDIIAILGMDELSDEDKLTVMRARKIQRFLSQPFHVAEVFTGSPGKYVALRDTIAGFKAILNGEYDHLPEQAFYMVGSIEEAVEKAKTLN.

148-155 is a binding site for ATP; that stretch reads GGAGVGKT.

The protein belongs to the ATPase alpha/beta chains family. As to quaternary structure, F-type ATPases have 2 components, CF(1) - the catalytic core - and CF(0) - the membrane proton channel. CF(1) has five subunits: alpha(3), beta(3), gamma(1), delta(1), epsilon(1). CF(0) has three main subunits: a(1), b(2) and c(9-12). The alpha and beta chains form an alternating ring which encloses part of the gamma chain. CF(1) is attached to CF(0) by a central stalk formed by the gamma and epsilon chains, while a peripheral stalk is formed by the delta and b chains.

The protein localises to the cell inner membrane. The enzyme catalyses ATP + H2O + 4 H(+)(in) = ADP + phosphate + 5 H(+)(out). Functionally, produces ATP from ADP in the presence of a proton gradient across the membrane. The catalytic sites are hosted primarily by the beta subunits. This chain is ATP synthase subunit beta, found in Neisseria meningitidis serogroup C (strain 053442).